The primary structure comprises 336 residues: Inositol 2-dehydrogenase (336 aa).

It belongs to the Gfo/Idh/MocA family. Homotetramer.

It carries out the reaction myo-inositol + NAD(+) = scyllo-inosose + NADH + H(+). Involved in the oxidation of myo-inositol (MI) to 2-keto-myo-inositol (2KMI or 2-inosose). The protein is Inositol 2-dehydrogenase of Pseudomonas fluorescens (strain ATCC BAA-477 / NRRL B-23932 / Pf-5).